The sequence spans 204 residues: Somatotropin (204 aa).

Residues 1–17 form the signal peptide; the sequence is MNSVVLQLSVVCLGVSS. Q18 is modified (pyrrolidone carboxylic acid). Residue H36 participates in Zn(2+) binding. C69 and C177 are joined by a disulfide. E186 is a binding site for Zn(2+). A disulfide bridge links C194 with C202.

It belongs to the somatotropin/prolactin family.

The protein resides in the secreted. Its function is as follows. Growth hormone plays an important role in growth control and involved in the regulation of several anabolic processes. The sequence is that of Somatotropin (gh) from Oreochromis mossambicus (Mozambique tilapia).